Here is a 1071-residue protein sequence, read N- to C-terminus: Nonribosomal peptide synthetase flvI (1071 aa).

Positions 33 to 417 (RRVLEQHDAP…GSLHFISRKD (385 aa)) are adenylation. The 77-residue stretch at 552–628 (MPLTEIELKM…MLCQNIKTDV (77 aa)) folds into the Carrier domain. Ser-589 is modified (O-(pantetheine 4'-phosphoryl)serine). The condensation stretch occupies residues 689–961 (NYTLRLEFKL…IDDRDIEQLS (273 aa)).

Belongs to the NRP synthetase family.

The enzyme catalyses (2S)-5,5-dimethylpiperidine-2-carboxylate + 10-hydroxy-pre-flavunoidine + ATP = flavunoidine + AMP + diphosphate + H(+). It functions in the pathway secondary metabolite biosynthesis; terpenoid biosynthesis. Its function is as follows. Nonribosomal peptide synthetase; part of the gene cluster that mediates the biosynthesis of flavunoidine, an alkaloidal terpenoid with a tetracyclic cage-like core connected to dimethylcadaverine via a C-N bond and acylated with 5,5-dimethyl-L-pipecolate. The tetracyclic core is synthesized by the terpene cyclase flvE and the cytochrome P450 monooxygenase flvD. The terpene cyclase flvE catalyzes the cyclization of farnesyl pyrophosphate (FPP) to form (1R,4R,5S)-(+)-acoradiene and the cytochrome P450 monooxygenase flvD is then responsible for oxidative conversion of (1R,4R,5S)-(+)-acoradiene into the tetracyclic cage present in the final product flavunoidine. In parallel, the N-methyltransferase flvH dimethylates L-lysine to give N,N-dimethyl-L-Lysin which is decarboxylated by flvG to afford dimethylcadaverine. The terpene cyclase-like protein flvF is the enzyme that attaches the dimethylcadaverine precusor at the C-7 of the tetracyclic cage to yield pre-flavunoidine. The cytochrome monooxygenase flvC hydroxylates the C-10 position of pre-flavunoidine whereas the NRPS flvI acylates the terpenoid core at the hydroxylated C-10 with dimethylpipecolate to yield final flavunoidine. The bifunctional enzyme flvA and the dehydrogenase flvB are responsible for the synthesis of the dimethylpipecolate precursor. The PLP-dependent lyase domain of flvA might use L-O-acetyl-homoserine and alpha-keto-isovalerate to form an intermediary ketone that can cyclize intramolecularly to yield an imine. The imine can be reduced by flvB to yield the 6-carboxylated pipecolate. The C-terminal alpha-KG-dependent oxygenase domain of flvA is then proposed to catalyze the decarboxylation to yield dimethylpipecolate. In Aspergillus flavus (strain ATCC 200026 / FGSC A1120 / IAM 13836 / NRRL 3357 / JCM 12722 / SRRC 167), this protein is Nonribosomal peptide synthetase flvI.